A 457-amino-acid polypeptide reads, in one-letter code: Prenyltransferase ucdE (457 aa).

Dimethylallyl diphosphate is bound by residues R106, K198, K277, Y279, Y382, Y447, and Y451.

It belongs to the tryptophan dimethylallyltransferase family.

The protein operates within secondary metabolite biosynthesis. In terms of biological role, nonribosomal peptide synthetase that mediates the biosynthesis of usterphenyllins and uscandidusins, p-terphenyl derivatives. Within the pathway, ucdE prenylates position C-5 of ring A of 3,15-dihydroxyterphenyllin to produce forms usterphenyllin B. UcdE further prenylates position C-14 of ring C of usterphenyllin B to form usterphenyllin A. The pathway begin with the biosynthesis of 4-hydroxyphenylpyruvate (HPPA) from L-tyrosine, possibly by the aminotransferase ucdG. The nonribosomal peptide synthetase ucdA then condenses two HPPA units to produce atromentin. The key step in this pathway is the reduction and dehydration of atromentin to form a terphenyl triol intermediate, performed by the NAD-dependent dehydrogenase ucdB. Further O-methylation by the methyltransferase ucdC forms terphenyllin carrying two methoxy moieties at C-9 and C-12, and subsequent dihydroxylation at C-3 of ring A and C-15 of ring C by the flavin-dependent oxygenase ucdD leads to 3,15-dihydroxyterphenyllin. Prenylation by ucdE at position C-5 of ring A forms usterphenyllin B, and is followed by a second prenylation at position C-14 of ring C to form usterphenyllin A. The following furan ring formation that leads to uscandidusins A and B was proven to be an unexpected spontaneous non-enzymatic reaction. This is Prenyltransferase ucdE from Aspergillus ustus.